The primary structure comprises 167 residues: MKPQLLLLEDVDGLGRSGDLVVAKPGYVRNYLLPKGKAVVASAGTLRLQAKLQEQRLLQAAADKEESLRLAEMLRSIVLDFQVRVDSENNMYGSVTVNDMISAAEQQGVVLTRKNFPRSHSGIKNLGRHVVGLKLKEGVTADLHLEVRADHEIIEQKELQSAEEQEG.

The protein belongs to the bacterial ribosomal protein bL9 family.

Its function is as follows. Binds to the 23S rRNA. The polypeptide is Large ribosomal subunit protein bL9 (Chlamydia trachomatis serovar L2 (strain ATCC VR-902B / DSM 19102 / 434/Bu)).